Consider the following 239-residue polypeptide: Orotidine 5'-phosphate decarboxylase (239 aa).

Residues D15, K37, 64–73 (DLKYHDIPNT), T126, R187, Q196, G216, and R217 contribute to the substrate site. K66 (proton donor) is an active-site residue.

It belongs to the OMP decarboxylase family. Type 1 subfamily. In terms of assembly, homodimer.

The catalysed reaction is orotidine 5'-phosphate + H(+) = UMP + CO2. Its pathway is pyrimidine metabolism; UMP biosynthesis via de novo pathway; UMP from orotate: step 2/2. Catalyzes the decarboxylation of orotidine 5'-monophosphate (OMP) to uridine 5'-monophosphate (UMP). The chain is Orotidine 5'-phosphate decarboxylase from Geotalea daltonii (strain DSM 22248 / JCM 15807 / FRC-32) (Geobacter daltonii).